Here is a 954-residue protein sequence, read N- to C-terminus: E3 ubiquitin-protein ligase arkadia (954 aa).

A compositionally biased stretch (polar residues) spans 50 to 66; the sequence is LCSDTNKQQRDLNSNGT. Disordered regions lie at residues 50-175 and 193-276; these read LCSD…VSSL and RKRF…SGGM. 2 stretches are compositionally biased toward low complexity: residues 112–131 and 232–251; these read SSFS…GDSD and SSSS…SSST. The SUMO interaction motif 1 (SIM) motif lies at 280-284; the sequence is VVVIE. Positions 305–311 match the SUMO interaction motif 2 (SIM) motif; it reads EVEIVTV. 3 disordered regions span residues 318-346, 364-452, and 485-509; these read RTTL…RNRV, TVDE…MPRL, and HFPH…SFRD. Residues 328–337 show a composition bias toward polar residues; sequence WGQNTQSGRT. An SUMO interaction motif 3 (SIM) motif is present at residues 360–364; that stretch reads VVDLT. A compositionally biased stretch (low complexity) spans 385 to 395; the sequence is VSTVSSNTSTS. The segment covering 485-496 has biased composition (basic residues); sequence HFPHHHHHHHQS. Positions 867-869 are ubiquitin binding; sequence YPH. Residues Cys-902 and Cys-905 each contribute to the Zn(2+) site. An RING-type; atypical zinc finger spans residues 902-943; it reads CTICLSILEEGEDVRRLPCMHLFHQVCVDQWLITNKKCPICR. The interval 917–921 is ubiquitin binding; the sequence is RLPCM. 2 residues coordinate Zn(2+): His-925 and Cys-928.

Belongs to the Arkadia family. Monomer.

It is found in the nucleus. The protein resides in the cytoplasm. It localises to the PML body. The enzyme catalyses S-ubiquitinyl-[E2 ubiquitin-conjugating enzyme]-L-cysteine + [acceptor protein]-L-lysine = [E2 ubiquitin-conjugating enzyme]-L-cysteine + N(6)-ubiquitinyl-[acceptor protein]-L-lysine.. It participates in protein modification; protein ubiquitination. Binds free ubiquitin non-covalently via its RING-type zinc finger. Ubiquitin-binding leads to enhance the E3 ubiquitin-protein ligase activity by stabilizing the ubiquitin-conjugating enzyme E2 (donor ubiquitin) in the 'closed' conformation and activating ubiquitin transfer. Its function is as follows. E3 ubiquitin-protein ligase required for mesoderm patterning during embryonic development. Acts as an enhancer of the transcriptional responses of the smad2/smad3 effectors, which are activated downstream of BMP. Acts by mediating ubiquitination and degradation of SMAD inhibitors such as smad7, inducing their proteasomal degradation and thereby enhancing the transcriptional activity of TGF-beta and BMP. Specifically binds polysumoylated chains via SUMO interaction motifs (SIMs) and mediates ubiquitination of sumoylated substrates. The regulation of the BMP-SMAD signaling is however independent of sumoylation and is not dependent of SUMO interaction motifs (SIMs). The chain is E3 ubiquitin-protein ligase arkadia (rnf111) from Xenopus tropicalis (Western clawed frog).